The following is a 208-amino-acid chain: Holliday junction branch migration complex subunit RuvA (208 aa).

Residues 1 to 69 form a domain I region; it reads MIGFLQGYVV…EDQMVLFGFA (69 aa). Residues 70-148 are domain II; that stretch reads VVAERDLFRQ…EWRDQAGLKT (79 aa). Positions 149 to 159 are flexible linker; the sequence is LPSAGPIDSVQ. The tract at residues 159 to 208 is domain III; it reads QEDVEMTLLALGYTSQEVMRALQAVGQNTALAKNSDTEAWIREAIAWLSQ.

Belongs to the RuvA family. Homotetramer. Forms an RuvA(8)-RuvB(12)-Holliday junction (HJ) complex. HJ DNA is sandwiched between 2 RuvA tetramers; dsDNA enters through RuvA and exits via RuvB. An RuvB hexamer assembles on each DNA strand where it exits the tetramer. Each RuvB hexamer is contacted by two RuvA subunits (via domain III) on 2 adjacent RuvB subunits; this complex drives branch migration. In the full resolvosome a probable DNA-RuvA(4)-RuvB(12)-RuvC(2) complex forms which resolves the HJ.

The protein resides in the cytoplasm. Functionally, the RuvA-RuvB-RuvC complex processes Holliday junction (HJ) DNA during genetic recombination and DNA repair, while the RuvA-RuvB complex plays an important role in the rescue of blocked DNA replication forks via replication fork reversal (RFR). RuvA specifically binds to HJ cruciform DNA, conferring on it an open structure. The RuvB hexamer acts as an ATP-dependent pump, pulling dsDNA into and through the RuvAB complex. HJ branch migration allows RuvC to scan DNA until it finds its consensus sequence, where it cleaves and resolves the cruciform DNA. This chain is Holliday junction branch migration complex subunit RuvA, found in Acaryochloris marina (strain MBIC 11017).